The chain runs to 113 residues: Hydrogenase maturation factor HypA (113 aa).

Position 2 (histidine 2) interacts with Ni(2+). Zn(2+) contacts are provided by cysteine 73, cysteine 76, cysteine 89, and cysteine 92.

The protein belongs to the HypA/HybF family.

Involved in the maturation of [NiFe] hydrogenases. Required for nickel insertion into the metal center of the hydrogenase. The sequence is that of Hydrogenase maturation factor HypA from Rhodopseudomonas palustris (strain TIE-1).